The primary structure comprises 612 residues: Probable serine/threonine-protein kinase WNK4 (612 aa).

The region spanning I25–L282 is the Protein kinase domain. Residues T105 to F108 and K155 contribute to the ATP site. D172 functions as the Proton acceptor in the catalytic mechanism.

The protein belongs to the protein kinase superfamily. Ser/Thr protein kinase family. WNK subfamily.

It carries out the reaction L-seryl-[protein] + ATP = O-phospho-L-seryl-[protein] + ADP + H(+). It catalyses the reaction L-threonyl-[protein] + ATP = O-phospho-L-threonyl-[protein] + ADP + H(+). The sequence is that of Probable serine/threonine-protein kinase WNK4 (WNK4) from Oryza sativa subsp. japonica (Rice).